Consider the following 270-residue polypeptide: tRNA pseudouridine synthase A (270 aa).

The active-site Nucleophile is the D52. Residue Y110 participates in substrate binding. A disordered region spans residues 251 to 270; the sequence is TGAADEPAAPHGVTETRMQL.

It belongs to the tRNA pseudouridine synthase TruA family. Homodimer.

It catalyses the reaction uridine(38/39/40) in tRNA = pseudouridine(38/39/40) in tRNA. Its function is as follows. Formation of pseudouridine at positions 38, 39 and 40 in the anticodon stem and loop of transfer RNAs. This is tRNA pseudouridine synthase A from Roseiflexus sp. (strain RS-1).